The sequence spans 130 residues: Small ribosomal subunit protein uS9 (130 aa).

The protein belongs to the universal ribosomal protein uS9 family.

This Paraburkholderia phymatum (strain DSM 17167 / CIP 108236 / LMG 21445 / STM815) (Burkholderia phymatum) protein is Small ribosomal subunit protein uS9.